The primary structure comprises 1248 residues: Reverse gyrase 1 (1248 aa).

An RG N-terminal-type zinc finger spans residues 7–44 (IPPSIYLFSCPNCGRSISTYRLLLGSVCNICLEEDKEY). Residues Cys-16, Cys-19, Cys-34, and Cys-37 each coordinate Zn(2+). Residues Gln-92 and 109-116 (APPGLGKT) each bind ATP. In terms of domain architecture, Helicase ATP-binding spans 96–262 (IYRLLSGESF…KKYRENTQKN (167 aa)). Residues 219-222 (DDVD) carry the DEAD box motif. The interval 621–1248 (QKVKTVLLVV…QVYEEINEIR (628 aa)) is topoisomerase I. Positions 625–789 (TVLLVVESPN…NIRRAEFHEV (165 aa)) constitute a Toprim domain. Glu-631 contacts Mg(2+). The RG C-terminal-type; atypical zinc finger occupies 706-735 (IKKCENNHQFTDFFESNKCPRCMTTKVRYD). 4 residues coordinate Zn(2+): Cys-709, His-713, Cys-724, and Cys-727. Asp-758 contacts Mg(2+). The Topo IA-type catalytic domain occupies 805 to 1248 (NVNLVKSQLV…QVYEEINEIR (444 aa)). Residue Tyr-965 is the O-(5'-phospho-DNA)-tyrosine intermediate of the active site.

In the N-terminal section; belongs to the DEAD box helicase family. DDVD subfamily. It in the C-terminal section; belongs to the type IA topoisomerase family. In terms of assembly, monomer. Zn(2+) serves as cofactor. Mg(2+) is required as a cofactor. In terms of processing, the N-terminus is blocked.

It is found in the cytoplasm. The enzyme catalyses ATP + H2O = ADP + phosphate + H(+). Functionally, modifies the topological state of DNA by introducing positive supercoils in an ATP-dependent process. Increases the linking number in steps of +1. Has a DNA-stimulated ATPase activity; closed circular ssDNA stimulates ATPase much better than dsDNA although negative supercoiled, positive supercoiled and relaxed dsDNA all stimulate ATPase activity. All NTPs permit topoisomerization (relaxation) of negatively supercoiled dsDNA without nucleotide hydrolysis. It transiently cleaves a single DNA strand and remains covalently bound to the 5' DNA end. Acts via a tyrosine residue. Reverse gyrase binds and unwinds DNA independently of ATP binding and DNA cleavage. May be involved in rewinding the DNA strands in the regions of the chromosome that have opened up to allow transcription or replication, probably acts via ssDNA regions of the chromosome. The protein is Reverse gyrase 1 of Sulfolobus acidocaldarius (strain ATCC 33909 / DSM 639 / JCM 8929 / NBRC 15157 / NCIMB 11770).